A 136-amino-acid polypeptide reads, in one-letter code: S-protein homolog 25 (136 aa).

Positions 1–20 (MNHSVFVILITITYFGLNQA) are cleaved as a signal peptide. Residues Asn-71 and Asn-84 are each glycosylated (N-linked (GlcNAc...) asparagine).

The protein belongs to the plant self-incompatibility (S1) protein family.

It localises to the secreted. The polypeptide is S-protein homolog 25 (Arabidopsis thaliana (Mouse-ear cress)).